Here is a 735-residue protein sequence, read N- to C-terminus: Protostadienol synthase helA (735 aa).

A PFTB 1 repeat occupies 132–173 (KQEMCRYLLNVVNEDGGWGLFIQSPSTVFGTVMNYCMLRILG). Catalysis depends on Asp-463, which acts as the Proton donor. 3 PFTB repeats span residues 490 to 531 (LQQA…YENV), 567 to 607 (LSRS…ACMG), and 616 to 663 (CQRA…AVIG).

It belongs to the terpene cyclase/mutase family.

The catalysed reaction is (S)-2,3-epoxysqualene = (17Z)-protosta-17(20),24-dien-3beta-ol. It participates in mycotoxin biosynthesis. Its function is as follows. Protostadienol synthase; part of the gene cluster that mediates the biosynthesis of helvolic acid, an antibacterial nortriterpenoid. Protostadienol synthase helA cyclizes (3S)-oxidosqualene to (17Z)-protosta-17(20),24-dien-3-beta-ol (protostadienol). The synthesis of protostadienol is followed by several steps of monooxygenation, dehydrogenation, and acyl transfer to yield the final helvolic acid. Following the cyclization to the tetracyclic protostadienol by helA, cytochrome P450 monooxygenases helB1-mediated and helB2-mediated oxidation at C-4 and C-16, acyltransferase helD2-dependent acetylation of 16-OH, oxidation of C-21 by cytochrome P450 monooxygenase helB4, and short chain dehydrogenase helC-dependent oxidative decarboxylation yield the fusidane skeleton. This intermediate is further modified in three additional steps mediated by the cytochrome P450 monooxygenase helB3, the acyltransferase helD1, and the 3-ketosteroid 1-dehydrogenase helE to give helvolic acid. Compared with the late stages in the biosynthesis of helvolic acid, enzymes involved in the early stage modifications act in a relatively strict order. The hydroxylation of C-16 by helB1 and subsequent acetylation by helD2 should occur before the helB3-mediated oxidation of C-21. C-4 demethylation in fusidane-type antibiotics proceeds in an unusual manner though it is also achieved by oxidative decarboxylation. The methyl group at C-4 beta position is oxidized by helB1 and subsequently removed by the short chain dehydrogenase helC. The sequence is that of Protostadienol synthase helA from Aspergillus fumigatus (strain ATCC MYA-4609 / CBS 101355 / FGSC A1100 / Af293) (Neosartorya fumigata).